We begin with the raw amino-acid sequence, 78 residues long: D-alanyl carrier protein (78 aa).

The Carrier domain maps to 1–78; the sequence is MEFRDQVLDL…KIVAVLEELR (78 aa). The residue at position 36 (serine 36) is an O-(pantetheine 4'-phosphoryl)serine.

It belongs to the DltC family. In terms of processing, 4'-phosphopantetheine is transferred from CoA to a specific serine of apo-DCP.

The protein localises to the cytoplasm. Its pathway is cell wall biogenesis; lipoteichoic acid biosynthesis. Functionally, carrier protein involved in the D-alanylation of lipoteichoic acid (LTA). The loading of thioester-linked D-alanine onto DltC is catalyzed by D-alanine--D-alanyl carrier protein ligase DltA. The DltC-carried D-alanyl group is further transferred to cell membrane phosphatidylglycerol (PG) by forming an ester bond, probably catalyzed by DltD. D-alanylation of LTA plays an important role in modulating the properties of the cell wall in Gram-positive bacteria, influencing the net charge of the cell wall. This is D-alanyl carrier protein from Staphylococcus saprophyticus subsp. saprophyticus (strain ATCC 15305 / DSM 20229 / NCIMB 8711 / NCTC 7292 / S-41).